The sequence spans 248 residues: Type III pantothenate kinase (248 aa).

6–13 (DIGNTETK) is a binding site for ATP. A substrate-binding site is contributed by 103–106 (GSDR). Asp105 serves as the catalytic Proton acceptor. A K(+)-binding site is contributed by Asp124. Thr127 is a binding site for ATP. Position 178 (Thr178) interacts with substrate.

This sequence belongs to the type III pantothenate kinase family. Homodimer. Requires NH4(+) as cofactor. It depends on K(+) as a cofactor.

Its subcellular location is the cytoplasm. The enzyme catalyses (R)-pantothenate + ATP = (R)-4'-phosphopantothenate + ADP + H(+). It functions in the pathway cofactor biosynthesis; coenzyme A biosynthesis; CoA from (R)-pantothenate: step 1/5. Catalyzes the phosphorylation of pantothenate (Pan), the first step in CoA biosynthesis. The protein is Type III pantothenate kinase of Pelagibacter ubique (strain HTCC1062).